Consider the following 195-residue polypeptide: Putative lysine exporter (195 aa).

6 helical membrane passes run 4-24 (LLSAVIIGIVLGWLCKDWLHF), 30-50 (LYVLITLIFFVGIQLRNNGIS), 61-81 (LMMGAIFTLSSLIGGVISAFF), 86-106 (ITQGLAFSSGFGWYSLSSVVL), 117-137 (IAFFNDLSREILSLFLIPLFM), and 170-190 (PIAISFGMVTNLLPPLLLVFF).

This sequence belongs to the LysO family.

It localises to the cell inner membrane. Its function is as follows. Mediates export of lysine. In Haemophilus influenzae (strain ATCC 51907 / DSM 11121 / KW20 / Rd), this protein is Putative lysine exporter.